We begin with the raw amino-acid sequence, 344 residues long: Probable aldo-keto reductase 1 (344 aa).

The active-site Proton donor is Y63. A substrate-binding site is contributed by H130. S209–G219 contacts NADP(+).

Belongs to the aldo/keto reductase family.

The chain is Probable aldo-keto reductase 1 from Arabidopsis thaliana (Mouse-ear cress).